We begin with the raw amino-acid sequence, 282 residues long: F-actin-capping protein subunit alpha (282 aa).

It belongs to the F-actin-capping protein alpha subunit family. As to quaternary structure, component of the F-actin capping complex, composed of a heterodimer of an alpha and a beta subunit.

Its subcellular location is the cytoplasm. It localises to the cytoskeleton. Its function is as follows. F-actin-capping proteins bind in a Ca(2+)-independent manner to the fast growing ends of actin filaments (barbed end) thereby blocking the exchange of subunits at these ends. Unlike other capping proteins (such as gelsolin and severin), these proteins do not sever actin filaments. This chain is F-actin-capping protein subunit alpha (cap-1), found in Caenorhabditis elegans.